Consider the following 1353-residue polypeptide: Tenascin-R (1353 aa).

Residues 1–33 form the signal peptide; the sequence is MGTDSENPVLRNVLISFNLLLLGAVLKPFECRL. Positions 132–156 form a coiled coil; the sequence is SLQELLSRIEMLEREVSMLRDQCNS. 2 N-linked (GlcNAc...) asparagine glycosylation sites follow: asparagine 179 and asparagine 197. EGF-like domains follow at residues 187–198, 234–260, 265–291, and 292–323; these read CICSEGWAGSNC, CPAG…GEDC, CPRD…GEDC, and GWLR…QDCS. A glycan (N-linked (GlcNAc...) asparagine) is linked at asparagine 277. Intrachain disulfides connect cysteine 296–cysteine 306 and cysteine 313–cysteine 322. 9 Fibronectin type-III domains span residues 327–419, 420–504, 505–594, 595–686, 687–776, 777–863, 864–952, 953–1037, and 1038–1126; these read PPEN…TPQG, LKFK…TLID, GPTQ…TEID, APKN…TELD, SPRD…VRPI, TQLH…TGMD, APKD…AMDA, PLGV…TLLD, and PPTN…GGRV. N-linked (GlcNAc...) asparagine glycosylation is found at asparagine 391, asparagine 469, and asparagine 580. Asparagine 734, asparagine 790, asparagine 872, asparagine 1031, asparagine 1041, asparagine 1256, and asparagine 1342 each carry an N-linked (GlcNAc...) asparagine glycan. Positions 1124 to 1339 constitute a Fibrinogen C-terminal domain; sequence GRVFANPQDC…FVEMKMRPYN (216 aa).

This sequence belongs to the tenascin family. As to quaternary structure, forms homodimers and homotrimers. Interacts with CNTN1, NFASC and CSPG5. As to expression, brain specific.

Its subcellular location is the secreted. It localises to the extracellular space. The protein resides in the extracellular matrix. Functionally, neural extracellular matrix (ECM) protein involved in interactions with different cells and matrix components. Involved in cell attachment and neurite formation. Interaction with CNTN1 enhances the neurite outgrowth. The protein is Tenascin-R (TNR) of Gallus gallus (Chicken).